Consider the following 273-residue polypeptide: Signal recognition particle subunit SEC65 (273 aa).

Residues 25 to 71 (PSLRTPIAPKITPKVVRSQDQENPAFLPGTNNNSNSNNNSSNEKEQL) form a disordered region. Residues 55–65 (NNNSNSNNNSS) show a composition bias toward low complexity.

In terms of assembly, fungal signal recognition particle (SRP) complex consists of a 7S RNA molecule (scR1) and at least six protein subunits: SRP72, SRP68, SRP54, SEC65, SRP21 and SRP14.

It is found in the cytoplasm. Its function is as follows. Signal-recognition-particle (SRP) assembly has a crucial role in targeting secretory proteins to the rough endoplasmic reticulum (ER) membrane. SRP is required for the cotranslational protein translocation for ER import and preferentially recognizes strongly hydrophobic signal sequences. It is involved in targeting the nascent chain-ribosome (RNC) complex to the ER and is proposed to participate in the arrest of nascent chain elongation during membrane targeting. SEC65 is required for SRP integrity. The polypeptide is Signal recognition particle subunit SEC65 (SEC65) (Saccharomyces cerevisiae (strain ATCC 204508 / S288c) (Baker's yeast)).